The chain runs to 216 residues: uncharacterized protein (216 aa).

A run of 6 helical transmembrane segments spans residues 12-32 (YVLGVVFVILLPGPNSLFVLA), 48-68 (GVFLGDAVLMLLSALGVASLL), 74-94 (LFIGLKYLGAAYLFYLGVGML), 134-154 (ILFFISFFIQFVDPGYAYPGL), 156-176 (FLVLAVILELVSALYLSFLIF), and 191-211 (LAAGATSGVGALFVGFGVKLA).

It belongs to the Rht family.

It is found in the cell membrane. This is an uncharacterized protein from Pseudomonas aeruginosa (strain ATCC 15692 / DSM 22644 / CIP 104116 / JCM 14847 / LMG 12228 / 1C / PRS 101 / PAO1).